A 147-amino-acid chain; its full sequence is UPF0306 protein YhbP (147 aa).

This sequence belongs to the UPF0306 family.

The chain is UPF0306 protein YhbP from Shigella dysenteriae serotype 1 (strain Sd197).